A 185-amino-acid polypeptide reads, in one-letter code: CDP-diacylglycerol--glycerol-3-phosphate 3-phosphatidyltransferase (185 aa).

The next 4 helical transmembrane spans lie at 7–26 (IFLT…AFYL), 33–52 (FITT…DGYL), 89–108 (FWIT…ISAL), and 151–172 (IAAI…IQYL).

The protein belongs to the CDP-alcohol phosphatidyltransferase class-I family.

The protein localises to the cell membrane. The enzyme catalyses a CDP-1,2-diacyl-sn-glycerol + sn-glycerol 3-phosphate = a 1,2-diacyl-sn-glycero-3-phospho-(1'-sn-glycero-3'-phosphate) + CMP + H(+). It participates in phospholipid metabolism; phosphatidylglycerol biosynthesis; phosphatidylglycerol from CDP-diacylglycerol: step 1/2. Functionally, this protein catalyzes the committed step to the synthesis of the acidic phospholipids. The sequence is that of CDP-diacylglycerol--glycerol-3-phosphate 3-phosphatidyltransferase (pgsA) from Haemophilus influenzae (strain ATCC 51907 / DSM 11121 / KW20 / Rd).